The following is a 477-amino-acid chain: Serine/threonine-protein kinase pakC (477 aa).

One can recognise a PH domain in the interval 13–108; sequence SPDKEGELKK…WMKAVEKGSE (96 aa). The region spanning 112–125 is the CRIB domain; sequence VSQPFNLKHEVHVD. The 255-residue stretch at 204 to 458 folds into the Protein kinase domain; sequence YKNMTKIGEG…ATDLLKHPFM (255 aa). Residues 210–218 and K233 contribute to the ATP site; that span reads IGEGAAGEV. D326 (proton acceptor) is an active-site residue.

This sequence belongs to the protein kinase superfamily. STE Ser/Thr protein kinase family. STE20 subfamily. In terms of assembly, interacts with GTP-bound racB. Requires Mg(2+) as cofactor.

Its subcellular location is the cytoplasm. It is found in the membrane. The enzyme catalyses L-seryl-[protein] + ATP = O-phospho-L-seryl-[protein] + ADP + H(+). The catalysed reaction is L-threonyl-[protein] + ATP = O-phospho-L-threonyl-[protein] + ADP + H(+). Its activity is regulated as follows. Kinase activity is rapidly and transiently increased in response to chemoattractant stimulation. Its function is as follows. Has role in the regulation of chemotaxis. The polypeptide is Serine/threonine-protein kinase pakC (pakC) (Dictyostelium discoideum (Social amoeba)).